A 67-amino-acid chain; its full sequence is Conotoxin Cl6.6b (67 aa).

A signal peptide spans 1 to 24; that stretch reads MKLTCVLIAAVLLLAVCQLDSADA. The propeptide occupies 25 to 37; the sequence is TGYMRKNPSLRSP. 3 disulfide bridges follow: cysteine 43–cysteine 57, cysteine 50–cysteine 61, and cysteine 56–cysteine 65.

Belongs to the conotoxin O1 superfamily. As to expression, expressed by the venom duct.

Its subcellular location is the secreted. The sequence is that of Conotoxin Cl6.6b from Californiconus californicus (California cone).